Consider the following 361-residue polypeptide: MKTTPFTETHIALGAKMHEFAGYNMPIEYSGIIDEHLTVCNAVGVFDVSHMGEFWVKGPNALEFLQQVTSNNVATLPVGKAQYTCFPNEEGGIVDDLLVYHYESEKYLLVVNAANIEKDWNWCVSHNTVGAELENASDRMAQLAIQGPKAMEVLQKLTPVNLSEIPYYAFTTGEFAGQKDVIISNTGYTGAGGFELYFYPEAGQAIWKAIFEAGAPEGIKPIGLGARDTLRLEMGFCLYGNDLSDTTSPLEAGLGWITKFVEGKNFTSRALLEKQKAEGLKRKLIAFEMVDRGIPRHGYELVNADGEKIGEVTSGTMSPMRKIGIGMGYVQTAYTALGTEIFIDVRGRKLKAVVVKAPFRK.

This sequence belongs to the GcvT family. The glycine cleavage system is composed of four proteins: P, T, L and H.

It catalyses the reaction N(6)-[(R)-S(8)-aminomethyldihydrolipoyl]-L-lysyl-[protein] + (6S)-5,6,7,8-tetrahydrofolate = N(6)-[(R)-dihydrolipoyl]-L-lysyl-[protein] + (6R)-5,10-methylene-5,6,7,8-tetrahydrofolate + NH4(+). In terms of biological role, the glycine cleavage system catalyzes the degradation of glycine. This chain is Aminomethyltransferase, found in Phocaeicola vulgatus (strain ATCC 8482 / DSM 1447 / JCM 5826 / CCUG 4940 / NBRC 14291 / NCTC 11154) (Bacteroides vulgatus).